The chain runs to 122 residues: Large ribosomal subunit protein uL14c (122 aa).

The protein belongs to the universal ribosomal protein uL14 family. In terms of assembly, part of the 50S ribosomal subunit.

It localises to the plastid. Its subcellular location is the chloroplast. Its function is as follows. Binds to 23S rRNA. This chain is Large ribosomal subunit protein uL14c, found in Pleurastrum terricola (Filamentous green alga).